Reading from the N-terminus, the 20-residue chain is YHYYNPEENHFCATWDASKP.

In terms of domain architecture, Barwin spans 1–20 (YHYYNPEENHFCATWDASKP).

The N-terminus is blocked.

This Punica granatum (Pomegranate) protein is Punein.